The primary structure comprises 491 residues: Protein nucleotidyltransferase YdiU (491 aa).

ATP contacts are provided by glycine 94, glycine 96, arginine 97, lysine 117, aspartate 129, glycine 130, arginine 180, and arginine 187. Residue aspartate 256 is the Proton acceptor of the active site. Mg(2+) contacts are provided by asparagine 257 and aspartate 266. Aspartate 266 contributes to the ATP binding site.

It belongs to the SELO family. The cofactor is Mg(2+). Requires Mn(2+) as cofactor.

It catalyses the reaction L-seryl-[protein] + ATP = 3-O-(5'-adenylyl)-L-seryl-[protein] + diphosphate. It carries out the reaction L-threonyl-[protein] + ATP = 3-O-(5'-adenylyl)-L-threonyl-[protein] + diphosphate. The enzyme catalyses L-tyrosyl-[protein] + ATP = O-(5'-adenylyl)-L-tyrosyl-[protein] + diphosphate. The catalysed reaction is L-histidyl-[protein] + UTP = N(tele)-(5'-uridylyl)-L-histidyl-[protein] + diphosphate. It catalyses the reaction L-seryl-[protein] + UTP = O-(5'-uridylyl)-L-seryl-[protein] + diphosphate. It carries out the reaction L-tyrosyl-[protein] + UTP = O-(5'-uridylyl)-L-tyrosyl-[protein] + diphosphate. In terms of biological role, nucleotidyltransferase involved in the post-translational modification of proteins. It can catalyze the addition of adenosine monophosphate (AMP) or uridine monophosphate (UMP) to a protein, resulting in modifications known as AMPylation and UMPylation. This chain is Protein nucleotidyltransferase YdiU, found in Brevibacillus brevis (strain 47 / JCM 6285 / NBRC 100599).